The chain runs to 276 residues: Sulfur carrier protein FdhD (276 aa).

Residue cysteine 122 is the Cysteine persulfide intermediate of the active site. Phenylalanine 259–lysine 264 lines the Mo-bis(molybdopterin guanine dinucleotide) pocket.

This sequence belongs to the FdhD family.

Its subcellular location is the cytoplasm. Required for formate dehydrogenase (FDH) activity. Acts as a sulfur carrier protein that transfers sulfur from IscS to the molybdenum cofactor prior to its insertion into FDH. The chain is Sulfur carrier protein FdhD from Photorhabdus laumondii subsp. laumondii (strain DSM 15139 / CIP 105565 / TT01) (Photorhabdus luminescens subsp. laumondii).